The primary structure comprises 815 residues: Leucine--tRNA ligase (815 aa).

A 'HIGH' region motif is present at residues 41 to 51 (PYPSGTLHVGH). The 'KMSKS' region signature appears at 576–580 (KMSKS). K579 contacts ATP.

It belongs to the class-I aminoacyl-tRNA synthetase family.

The protein resides in the cytoplasm. The enzyme catalyses tRNA(Leu) + L-leucine + ATP = L-leucyl-tRNA(Leu) + AMP + diphosphate. This Pseudothermotoga lettingae (strain ATCC BAA-301 / DSM 14385 / NBRC 107922 / TMO) (Thermotoga lettingae) protein is Leucine--tRNA ligase.